The chain runs to 365 residues: PDZ and LIM domain protein 3 (365 aa).

The region spanning 1 to 84 (MPQNVILPGP…QLCLKIDRAE (84 aa)) is the PDZ domain. Ser18 carries the phosphoserine modification. Positions 126–156 (FIIPGRSSGCSTPSGIDGGSGRSTPSSVSTL) are disordered. Residues 147–156 (RSTPSSVSTL) show a composition bias toward polar residues. Residues 293–352 (PLCDKCGSGIVGAVVKARDKYRHPECFVCADCNLNLKQKGYFFVEGELYCETHARARMRP) enclose the LIM zinc-binding domain.

Interacts with ACTN2. Forms a heterodimer with PDLIM4 (via LIM domain).

Its subcellular location is the cytoplasm. It is found in the myofibril. It localises to the sarcomere. The protein localises to the z line. Its function is as follows. May play a role in the organization of actin filament arrays within muscle cells. The sequence is that of PDZ and LIM domain protein 3 (PDLIM3) from Sus scrofa (Pig).